The chain runs to 956 residues: Endogenous retrovirus group K member 8 Pol protein (956 aa).

Positions 57–245 (LEKGHIEPSF…TPFHYLGMQI (189 aa)) constitute a Reverse transcriptase domain. An LPQG motif is present at residues 161–164 (LPQG). A YXDD motif is present at residues 195–198 (YIDD). In terms of domain architecture, RNase H type-1 spans 460-590 (LENALTVFTD…ADLLVSSALI (131 aa)). Positions 469, 497, 517, and 582 each coordinate Mg(2+). The Integrase-type zinc finger occupies 587-628 (SALIKAQELHALTHVNAAGLKNKFDVTWKQAKDIVQHCTQCQ). Positions 596, 600, 624, and 627 each coordinate Zn(2+). The Integrase catalytic domain occupies 642–803 (RGLCPNALWQ…TSAEQHLTGK (162 aa)). Positions 811-859 (KLIWWKDNKNKTWEIGKVITWGRGFACVSPGENQLPVWIPTRHLKFYNE) form a DNA-binding region, integrase-type. Residues 864-890 (AKKSTSAETETPQSSTVDSQDEQNGDV) form a disordered region. Positions 869–881 (SAETETPQSSTVD) are enriched in polar residues.

This sequence belongs to the beta type-B retroviral polymerase family. HERV class-II K(HML-2) pol subfamily.

It carries out the reaction DNA(n) + a 2'-deoxyribonucleoside 5'-triphosphate = DNA(n+1) + diphosphate. It catalyses the reaction Endonucleolytic cleavage to 5'-phosphomonoester.. Early post-infection, the reverse transcriptase converts the viral RNA genome into double-stranded viral DNA. The RNase H domain of the reverse transcriptase performs two functions. It degrades the RNA template and specifically removes the RNA primer from the RNA/DNA hybrid. Following nuclear import, the integrase catalyzes the insertion of the linear, double-stranded viral DNA into the host cell chromosome. Endogenous Pol proteins may have kept, lost or modified their original function during evolution. The chain is Endogenous retrovirus group K member 8 Pol protein (ERVK-8) from Homo sapiens (Human).